A 431-amino-acid chain; its full sequence is Chaperone SurA (431 aa).

The N-terminal stretch at 1 to 20 is a signal peptide; that stretch reads MKLTVVTFALLAFISFNTFA. PpiC domains are found at residues 171 to 272 and 281 to 381; these read QAEY…KIID and VAEL…QLMD.

It localises to the periplasm. The catalysed reaction is [protein]-peptidylproline (omega=180) = [protein]-peptidylproline (omega=0). Chaperone involved in the correct folding and assembly of outer membrane proteins. Recognizes specific patterns of aromatic residues and the orientation of their side chains, which are found more frequently in integral outer membrane proteins. May act in both early periplasmic and late outer membrane-associated steps of protein maturation. This Pseudoalteromonas atlantica (strain T6c / ATCC BAA-1087) protein is Chaperone SurA.